The following is a 297-amino-acid chain: MAEITASMVKELREKTDAPMMECKKALTEAGGDMAKAEEVLRIKLGNKASKAAARVTAEGIVGTYLSADGKLAAMVELNCETDFVAKNDDFIGLAGSLATLVATKNPADVEALSALELDGQTVEAFRTALVGKIGENITVRRFSRIEAKGQVASYVHAGAKIGVLVDLVGGDEQLAKDLAMHIAASKPKSLDASGVSQELIESERRIAVEKAREAGKPEAMLEKIAEGTVQKFLKEVTLLGQPFVKDDKQTVEALLKARGASVASFVLYIVGEGIEKKVTDFAAEVAEQAAAAAAKK.

An involved in Mg(2+) ion dislocation from EF-Tu region spans residues 82–85 (TDFV).

It belongs to the EF-Ts family.

Its subcellular location is the cytoplasm. Associates with the EF-Tu.GDP complex and induces the exchange of GDP to GTP. It remains bound to the aminoacyl-tRNA.EF-Tu.GTP complex up to the GTP hydrolysis stage on the ribosome. The sequence is that of Elongation factor Ts from Azoarcus sp. (strain BH72).